A 1633-amino-acid chain; its full sequence is Laminin-like protein lam-2 (1633 aa).

Residues 1–19 form the signal peptide; the sequence is MTSILWLFSLAVLWHMGQP. Residues 47-286 enclose the Laminin N-terminal domain; that stretch reads QPQRCVPDFV…AISDFAVGGR (240 aa). N-linked (GlcNAc...) asparagine glycosylation is found at Asn116 and Asn136. 16 cysteine pairs are disulfide-bonded: Cys287–Cys296, Cys289–Cys310, Cys312–Cys321, Cys324–Cys344, Cys347–Cys356, Cys349–Cys372, Cys375–Cys384, Cys387–Cys400, Cys403–Cys415, Cys405–Cys421, Cys423–Cys432, Cys435–Cys447, Cys450–Cys464, Cys452–Cys471, Cys473–Cys482, and Cys485–Cys500. Laminin EGF-like domains lie at 287-346, 347-402, 403-449, and 450-502; these read CKCN…ECIA, CNCS…YCVA, CGCN…GCKN, and CGCE…GCTP. The N-linked (GlcNAc...) asparagine glycan is linked to Asn348. Residues 503-512 form the Laminin EGF-like 5; first part domain; sequence CFCFGHSSIC. N-linked (GlcNAc...) asparagine glycosylation is found at Asn522, Asn658, and Asn740. The Laminin IV type A domain occupies 529–701; that stretch reads QDKQKWAGQN…NPKQATWIEH (173 aa). A Laminin EGF-like 5; second part domain is found at 702-747; that stretch reads CECLPGFVGQFCESCESGFRRETKFGGPFNHCIKCDCHNHSNSCEA. 23 disulfides stabilise this stretch: Cys736–Cys745, Cys738–Cys752, Cys754–Cys763, Cys766–Cys782, Cys785–Cys803, Cys806–Cys815, Cys818–Cys832, Cys835–Cys849, Cys837–Cys856, Cys859–Cys868, Cys871–Cys887, Cys890–Cys909, Cys892–Cys916, Cys918–Cys927, Cys930–Cys943, Cys946–Cys958, Cys948–Cys965, Cys967–Cys976, Cys979–Cys991, Cys994–Cys1006, Cys996–Cys1013, Cys1015–Cys1024, and Cys1027–Cys1038. In terms of domain architecture, Laminin EGF-like 6; truncated spans 752–784; the sequence is CICEHNTAGDTCERCARGYYGDALQGTEEDCQK. Laminin EGF-like domains lie at 785 to 834, 835 to 889, 890 to 945, 946 to 993, and 994 to 1040; these read CPCP…ECVE, CACS…NCQS, CGCF…GCQE, CNCD…GCQP, and CDCE…GCLP. A glycan (N-linked (GlcNAc...) asparagine) is linked at Asn936. 7 N-linked (GlcNAc...) asparagine glycosylation sites follow: Asn1077, Asn1183, Asn1226, Asn1259, Asn1336, Asn1452, and Asn1528.

During the formation of neuromuscular junctions at the larval stage, negatively regulates membrane protrusion from body wall muscles, probably downstream of the integrin complex formed by pat-2 and pat-3. The sequence is that of Laminin-like protein lam-2 (lam-2) from Caenorhabditis elegans.